A 119-amino-acid chain; its full sequence is Large ribosomal subunit protein uL18 (119 aa).

Belongs to the universal ribosomal protein uL18 family. Part of the 50S ribosomal subunit; part of the 5S rRNA/L5/L18/L25 subcomplex. Contacts the 5S and 23S rRNAs.

In terms of biological role, this is one of the proteins that bind and probably mediate the attachment of the 5S RNA into the large ribosomal subunit, where it forms part of the central protuberance. The chain is Large ribosomal subunit protein uL18 from Chlorobium phaeovibrioides (strain DSM 265 / 1930) (Prosthecochloris vibrioformis (strain DSM 265)).